Consider the following 223-residue polypeptide: Protein DEHYDRATION-INDUCED 19 homolog 3 (223 aa).

T114 bears the Phosphothreonine mark. At S116 the chain carries Phosphoserine.

This sequence belongs to the Di19 family. Phosphorylated in vitro by CPK3 or CPK11. In terms of tissue distribution, expressed in seedlings, roots, leaves, stems, flowers and siliques.

It localises to the nucleus. This Arabidopsis thaliana (Mouse-ear cress) protein is Protein DEHYDRATION-INDUCED 19 homolog 3 (DI19-3).